Reading from the N-terminus, the 192-residue chain is Phosphoheptose isomerase (192 aa).

One can recognise an SIS domain in the interval 34 to 192 (VVDAYRAGNK…VERELFLKGN (159 aa)). 49 to 51 (NGG) lines the substrate pocket. Positions 58 and 62 each coordinate Zn(2+). Residues E62, 91–92 (ND), 117–119 (STS), S122, and Q169 contribute to the substrate site. Residues Q169 and H177 each coordinate Zn(2+).

It belongs to the SIS family. GmhA subfamily. Homotetramer. Requires Zn(2+) as cofactor.

Its subcellular location is the cytoplasm. It carries out the reaction 2 D-sedoheptulose 7-phosphate = D-glycero-alpha-D-manno-heptose 7-phosphate + D-glycero-beta-D-manno-heptose 7-phosphate. Its pathway is carbohydrate biosynthesis; D-glycero-D-manno-heptose 7-phosphate biosynthesis; D-glycero-alpha-D-manno-heptose 7-phosphate and D-glycero-beta-D-manno-heptose 7-phosphate from sedoheptulose 7-phosphate: step 1/1. Its function is as follows. Catalyzes the isomerization of sedoheptulose 7-phosphate in D-glycero-D-manno-heptose 7-phosphate. This is Phosphoheptose isomerase from Geobacter sp. (strain M21).